Reading from the N-terminus, the 345-residue chain is Dihydroorotate dehydrogenase (quinone) (345 aa).

FMN-binding positions include A65–K69 and T89. Position 69 (K69) interacts with substrate. N114–F118 contributes to the substrate binding site. Residues N146 and N179 each contribute to the FMN site. N179 serves as a coordination point for substrate. S182 (nucleophile) is an active-site residue. Residue N184 participates in substrate binding. The FMN site is built by K224 and T252. N253–T254 lines the substrate pocket. FMN is bound by residues G275, G304, and Y325 to T326.

Belongs to the dihydroorotate dehydrogenase family. Type 2 subfamily. Monomer. FMN is required as a cofactor.

Its subcellular location is the cell membrane. It catalyses the reaction (S)-dihydroorotate + a quinone = orotate + a quinol. The protein operates within pyrimidine metabolism; UMP biosynthesis via de novo pathway; orotate from (S)-dihydroorotate (quinone route): step 1/1. In terms of biological role, catalyzes the conversion of dihydroorotate to orotate with quinone as electron acceptor. The protein is Dihydroorotate dehydrogenase (quinone) of Leptothrix cholodnii (strain ATCC 51168 / LMG 8142 / SP-6) (Leptothrix discophora (strain SP-6)).